Here is a 408-residue protein sequence, read N- to C-terminus: MEPSPSSPPSSPPEILDLDSIKALKILGKGATGTVFLAHDVVSTSSSSSPFAVKLVPKSSASSLRRARWEIEVLRRLSVDSNQNPFLPRLLASFESPEYFAWAVPYCSGGDLNVLLHRQNDGVFSSSVIRFYVAEIVCALEHLHTMGIAYRDLKPENILIQQSGHVTLTDFDLSRSLKKPLRPHFYQPDPELIIDRKKSRSFSRLISPTAEKNKTGLKKTRSARVNPINRRKTSFSSGERSNSFVGTDEYVSPEVIRGDGHDFAVDWWALGVLTYEMMYGETPFKGKSKKETFRNVLMKEPEFAGKPNDLTDLIRRLLVKDPNRRLGCHRGAAEIKELAFFAGVRWDLLTEVLRPPFIPLRDDGELTVGGFDIREHFEKLRTTPSSAPPSPLRSPPHVCRKNDPFIEF.

The region spanning 21–341 is the Protein kinase domain; sequence IKALKILGKG…AAEIKELAFF (321 aa). Residues 27–35 and Lys54 contribute to the ATP site; that span reads LGKGATGTV. Residue Asp152 is the Proton acceptor of the active site. The AGC-kinase C-terminal domain maps to 342-408; the sequence is AGVRWDLLTE…CRKNDPFIEF (67 aa).

Belongs to the protein kinase superfamily. AGC Ser/Thr protein kinase family. As to expression, expressed in the epidermis and cortex of the transition zone of the root apex. Expressed in rosette leaves, stems, flowers and siliques.

The protein localises to the cytoplasm. Its subcellular location is the nucleus. It catalyses the reaction L-seryl-[protein] + ATP = O-phospho-L-seryl-[protein] + ADP + H(+). The enzyme catalyses L-threonyl-[protein] + ATP = O-phospho-L-threonyl-[protein] + ADP + H(+). Regulates planar ovule integument development. This chain is Serine/threonine-protein kinase UCNL, found in Arabidopsis thaliana (Mouse-ear cress).